Here is a 266-residue protein sequence, read N- to C-terminus: Syntaxin-71 (266 aa).

The Cytoplasmic segment spans residues 1–243 (MTVIDILTRV…TVNQLRSSRN (243 aa)). S12 carries the post-translational modification Phosphoserine. The stretch at 44–87 (ETQIETALEKAELVTKEKNRAAAVAMNAEIRRTKARLSEEVPKL) forms a coiled coil. Residues 122–146 (DGTAGGPKSTSAWTPSSTTSRPDIK) form a disordered region. The segment covering 130–141 (STSAWTPSSTTS) has biased composition (low complexity). The t-SNARE coiled-coil homology domain occupies 172 to 234 (EMRKIKQEQG…KNTNVRLKDT (63 aa)). A helical; Anchor for type IV membrane protein membrane pass occupies residues 244 to 264 (FCIDIVLLCIVLGIAAYLYNV). Over 265 to 266 (LK) the chain is Vesicular.

It belongs to the syntaxin family. Part of the t-SNARE complex. Expressed in root, leaf, stem, flower and silique.

The protein localises to the membrane. Its function is as follows. Vesicle trafficking protein that functions in the secretory pathway. The chain is Syntaxin-71 (SYP71) from Arabidopsis thaliana (Mouse-ear cress).